Reading from the N-terminus, the 659-residue chain is Biosynthetic arginine decarboxylase 2 (659 aa).

Lys119 carries the N6-(pyridoxal phosphate)lysine modification. 311-321 (LNVGGGLAVDY) provides a ligand contact to substrate.

It belongs to the Orn/Lys/Arg decarboxylase class-II family. SpeA subfamily. Mg(2+) serves as cofactor. The cofactor is pyridoxal 5'-phosphate.

It catalyses the reaction L-arginine + H(+) = agmatine + CO2. Its function is as follows. Catalyzes the biosynthesis of agmatine from arginine. This is Biosynthetic arginine decarboxylase 2 (speA2) from Synechocystis sp. (strain ATCC 27184 / PCC 6803 / Kazusa).